The sequence spans 24 residues: Brevinin-1PTb (24 aa).

A disulfide bridge connects residues C18 and C24.

Expressed by the skin glands.

Its subcellular location is the secreted. In terms of biological role, has antibacterial activity against the Gram-positive bacterium S.aureus ATCC 25923 and the Gram-negative bacterium E.coli ATCC 25726. This chain is Brevinin-1PTb, found in Pulchrana picturata (Malaysian fire frog).